The sequence spans 104 residues: Large ribosomal subunit protein bL21 (104 aa).

It belongs to the bacterial ribosomal protein bL21 family. Part of the 50S ribosomal subunit. Contacts protein L20.

Functionally, this protein binds to 23S rRNA in the presence of protein L20. This chain is Large ribosomal subunit protein bL21, found in Rhodopirellula baltica (strain DSM 10527 / NCIMB 13988 / SH1).